Consider the following 832-residue polypeptide: Spindle pole body component alp6 (832 aa).

Positions 1–186 (MSEIHVKTAL…STETSSVQHT (186 aa)) are interaction with mzt1. Thr286 is subject to Phosphothreonine.

The protein belongs to the TUBGCP family. In terms of assembly, part of the gamma-tubulin complex. Interacts directly with mzt1. Interacts with mto1. Interacts with mto2.

It is found in the cytoplasm. It localises to the cytoskeleton. The protein resides in the microtubule organizing center. Its subcellular location is the spindle pole body. In terms of biological role, component of the gamma tubule complex that is required for the regulation of both interphase microtubules and mitotic bipolar spindles. The polypeptide is Spindle pole body component alp6 (alp6) (Schizosaccharomyces pombe (strain 972 / ATCC 24843) (Fission yeast)).